A 478-amino-acid polypeptide reads, in one-letter code: Proline--tRNA ligase (478 aa).

It belongs to the class-II aminoacyl-tRNA synthetase family. ProS type 3 subfamily. In terms of assembly, homodimer.

It is found in the cytoplasm. The catalysed reaction is tRNA(Pro) + L-proline + ATP = L-prolyl-tRNA(Pro) + AMP + diphosphate. Its function is as follows. Catalyzes the attachment of proline to tRNA(Pro) in a two-step reaction: proline is first activated by ATP to form Pro-AMP and then transferred to the acceptor end of tRNA(Pro). The sequence is that of Proline--tRNA ligase from Clostridium botulinum (strain Okra / Type B1).